Here is a 532-residue protein sequence, read N- to C-terminus: Nectin-4 (532 aa).

A signal peptide spans 1 to 30; the sequence is MGPLHGALLPPISVTVSLLILLLCAPGGRC. The region spanning 31-142 is the Ig-like V-type domain; the sequence is GVVHTEKSMT…GNFDAELELK (112 aa). Over 31-344 the chain is Extracellular; it reads GVVHTEKSMT…TKIDLVSVSL (314 aa). Cystine bridges form between C51/C125, C169/C221, and C266/C312. 2 Ig-like C2-type domains span residues 146 to 235 and 244 to 328; these read PPLP…KRIT and AEVS…AIVS. Positions 152-179 are disordered; sequence GPGPPLTEGEGKSLAASCTAEGNPAPTL. N189 and N282 each carry an N-linked (GlcNAc...) asparagine glycan. Residues 345–365 form a helical membrane-spanning segment; it reads GSVGILTAVLLVVLVITLLLV. Residues 366–532 lie on the Cytoplasmic side of the membrane; that stretch reads NRHHKRQTKQ…IYINGRGHLV (167 aa). Positions 453–491 are disordered; that stretch reads QTELLSTVPDEEVKEDGEEPEQVEQSLEKEPNPTEPDGM. Over residues 461–474 the composition is skewed to acidic residues; the sequence is PDEEVKEDGEEPEQ.

It belongs to the nectin family.

It is found in the cell membrane. Functionally, may be involved in cell adhesion. The chain is Nectin-4 from Xenopus tropicalis (Western clawed frog).